The chain runs to 112 residues: uncharacterized protein (112 aa).

Fe cation-binding residues include C39, C105, and C107.

The protein belongs to the HesB/IscA family. Ycf83 subfamily.

Its subcellular location is the plastid. The protein localises to the chloroplast. This is an uncharacterized protein from Galdieria sulphuraria (Red alga).